Reading from the N-terminus, the 659-residue chain is tRNA (guanine(26)-N(2))-dimethyltransferase (659 aa).

Residues M1–F23 constitute a mitochondrion transit peptide. The Trm1 methyltransferase domain maps to T55 to M499. R82 serves as a coordination point for S-adenosyl-L-methionine. At S120 the chain carries Phosphoserine. Positions 166 and 184 each coordinate S-adenosyl-L-methionine. C348, C351, C384, and C387 together coordinate Zn(2+). S517 is subject to Phosphoserine. 2 disordered regions span residues E537–E578 and R616–D659. Residues S543–A575 carry the Nuclear localization signal motif. The segment at R600 to P627 adopts a C3H1-type zinc-finger fold. S625 is modified (phosphoserine). Residues T628 and T646 each carry the phosphothreonine modification.

It belongs to the class I-like SAM-binding methyltransferase superfamily. Trm1 family. Post-translationally, (Microbial infection) Cleaved between Gln-530 and Ala-531 by the 3C-like proteinase nsp5 from human coronavirus SARS-CoV-2, leading to its inactivation.

The protein localises to the mitochondrion. The protein resides in the nucleus. Its subcellular location is the cytoplasm. The enzyme catalyses guanosine(26) in tRNA + 2 S-adenosyl-L-methionine = N(2)-dimethylguanosine(26) in tRNA + 2 S-adenosyl-L-homocysteine + 2 H(+). Dimethylates a single guanine residue at position 26 of most nuclear- and mitochondrial-encoded tRNAs using S-adenosyl-L-methionine as donor of the methyl groups. tRNA guanine(26)-dimethylation is required for redox homeostasis and ensure proper cellular proliferation and oxidative stress survival. This chain is tRNA (guanine(26)-N(2))-dimethyltransferase, found in Homo sapiens (Human).